The chain runs to 557 residues: uncharacterized protein (557 aa).

The N-terminal stretch at 1 to 30 (MAPRRRRHTRIAGLRVVGTATLVAATTLTA) is a signal peptide. Cysteine 31 is lipidated: N-palmitoyl cysteine. Cysteine 31 carries the S-diacylglycerol cysteine lipid modification.

The protein to M.bovis Mb2616c and M.leprae ML0489.

The protein resides in the cell membrane. This is an uncharacterized protein from Mycobacterium tuberculosis (strain ATCC 25618 / H37Rv).